Here is a 550-residue protein sequence, read N- to C-terminus: Solute carrier family 22 member 6 (550 aa).

The Cytoplasmic segment spans residues 1–9 (MAFNDLLQQ). The chain crosses the membrane as a helical span at residues 10–30 (VGGVGRFQQIQVTLVVLPLLL). Over 31 to 135 (MASHNTLQNF…LVCSHRALRQ (105 aa)) the chain is Extracellular. 3 N-linked (GlcNAc...) asparagine glycosylation sites follow: asparagine 39, asparagine 92, and asparagine 113. A helical transmembrane segment spans residues 136–156 (LAQSLYMVGVLLGAMVFGYLA). The Cytoplasmic segment spans residues 157-164 (DRLGRRKV). A helical membrane pass occupies residues 165–187 (LILNYLQTAVSGTCTAFAPNFSI). Residues 188–195 (YCAFRLLS) are Extracellular-facing. Residues 196-216 (GMSLAGISLNCMTLNVEWMPI) traverse the membrane as a helical segment. Topologically, residues 217 to 224 (HTRACVGT) are cytoplasmic. The chain crosses the membrane as a helical span at residues 225–245 (LIGYVYSLGQFLLAGVAYAVP). The Extracellular portion of the chain corresponds to 246–248 (HWR). The chain crosses the membrane as a helical span at residues 249-269 (HLQLLVSAPFFAFFIYSWFFI). The Cytoplasmic portion of the chain corresponds to 270 to 337 (ESARWHSSSG…ELLRCPTLRH (68 aa)). The chain crosses the membrane as a helical span at residues 338-358 (LFLCLSMLWFATSFAYYGLVM). The Extracellular segment spans residues 359–368 (DLQGFGVSIY). The chain crosses the membrane as a helical span at residues 369 to 389 (LIQVIFGAVDLPAKLVGFLVI). The Cytoplasmic segment spans residues 390 to 395 (NSLGRR). A helical membrane pass occupies residues 396–416 (PAQMAALLLAGICILLNGVIP). Residues 417–420 (QDQS) lie on the Extracellular side of the membrane. A helical transmembrane segment spans residues 421–444 (IVRTSLAVPGKGCLAASFNCIFLY). Residues 445–455 (TGELYPTMIRQ) lie on the Cytoplasmic side of the membrane. A helical transmembrane segment spans residues 456–475 (TGMGMGSTMARVGSIVSPLV). Residues 476 to 484 (SMTAELYPS) lie on the Extracellular side of the membrane. Residues 485–505 (MPLFIYGAVPVAASAVTVLLP) form a helical membrane-spanning segment. Residues 506-550 (ETLGQPLPDTVQDLESRKGKQTRQQQEHQKYMVPLQASAQEKNGL) are Cytoplasmic-facing. Residues 514–550 (DTVQDLESRKGKQTRQQQEHQKYMVPLQASAQEKNGL) form a disordered region.

The protein belongs to the major facilitator (TC 2.A.1) superfamily. Organic cation transporter (TC 2.A.1.19) family. Glycosylated. Glycosylation is necessary for proper targeting of the transporter to the plasma membrane.

It localises to the cell membrane. It catalyses the reaction prostaglandin F2alpha(out) = prostaglandin F2alpha(in). It carries out the reaction prostaglandin E2(out) = prostaglandin E2(in). Involved in the renal elimination of endogenous and exogenous organic anions. Functions as organic anion exchanger when the uptake of one molecule of organic anion is coupled with an efflux of one molecule of endogenous dicarboxylic acid (glutarate, ketoglutarate, etc). Mediates the transport of prostaglandin E2 (PGE2) and prostaglandin F2-alpha (PGF2-alpha) and may be involved in their renal excretion. Also mediates the sodium-independent uptake of p-aminohippurate (PAH), 2,3-dimercapto-1-propanesulfonic acid (DMPS), cidofovir, adefovir, 9-(2-phosphonylmethoxyethyl) guanine (PMEG), 9-(2-phosphonylmethoxyethyl) diaminopurine (PMEDAP), ochratoxin (OTA), acyclovir (ACV), 3'-azido-3-'deoxythymidine (AZT), cimetidine (CMD), 2,4-dichloro-phenoxyacetate (2,4-D), hippurate (HA), indoleacetate (IA), indoxyl sulfate (IS) and 3-carboxy-4-methyl-5-propyl-2-furanpropionate (CMPF) and edaravone sulfate. PAH uptake is inhibited by p-chloromercuribenzenesulphonate (PCMBS), diethyl pyrocarbonate (DEPC), indomethacin, sulindac, diclofenac, carprofen, okadaic acid, benzothiazolylcysteine (BTC), S-chlorotrifluoroethylcysteine (CTFC), cysteine S-conjugates S-dichlorovinylcysteine (DCVC), furosemide, steviol, phorbol 12-myristate 13-acetate (PMA), calcium ionophore A23187, benzylpenicillin, bumetamide, losartan, probenecid, phenol red, urate, glutarate and alpha-ketoglutarate. The sequence is that of Solute carrier family 22 member 6 (SLC22A6) from Pongo abelii (Sumatran orangutan).